The sequence spans 1040 residues: Contactin-2 (1040 aa).

Positions 1-30 (MGTHARKKASLLLLVLATVALVSSPGWSFA) are cleaved as a signal peptide. 6 consecutive Ig-like C2-type domains span residues 39-130 (PIFE…AVLR), 135-224 (QEFS…SVFS), 241-324 (PSIK…GRII), 329-413 (PEWL…AELA), 419-506 (PDFR…GILS), and 511-605 (TKIT…ATVL). Cystine bridges form between cysteine 63/cysteine 113, cysteine 157/cysteine 209, cysteine 263/cysteine 308, and cysteine 350/cysteine 397. Asparagine 78, asparagine 200, and asparagine 206 each carry an N-linked (GlcNAc...) asparagine glycan. N-linked (GlcNAc...) asparagine glycans are attached at residues asparagine 463, asparagine 479, asparagine 500, and asparagine 527. Fibronectin type-III domains lie at 612-710 (PPGG…TKEA), 715-812 (APSG…SAEE), 817-913 (APAK…VKPP), and 917-1008 (PPGN…NGGT). An N-linked (GlcNAc...) asparagine glycan is attached at asparagine 777. The short motif at 796 to 798 (RGD) is the Cell attachment site element. Residues asparagine 832, asparagine 920, and asparagine 942 are each glycosylated (N-linked (GlcNAc...) asparagine). Positions 895-921 (RAGTGPASPSADAMTVKPPPRRPPGNI) are disordered. A lipid anchor (GPI-anchor amidated alanine) is attached at alanine 1015. Positions 1016 to 1040 (AARPAHPGPAFSCMVILMLAGYQKL) are cleaved as a propeptide — removed in mature form.

It belongs to the immunoglobulin superfamily. Contactin family. In neural tissues in embryos, and in adult brain, spinal cord and cerebellum.

It localises to the cell membrane. Its function is as follows. May play a role in the initial growth and guidance of axons. May be involved in cell adhesion. In conjunction with another transmembrane protein, CNTNAP2, contributes to the organization of axonal domains at nodes of Ranvier by maintaining voltage-gated potassium channels at the juxtaparanodal region. The chain is Contactin-2 (Cntn2) from Rattus norvegicus (Rat).